Consider the following 131-residue polypeptide: MAKRKQNVRSKRKVKKNIESGIVHIRSTFNNTIVTITDMQGNAISWATAGNMGFKGSRKSTPFAAQLASETAAKTAMDNGMRTVEVNVKGPGAGREAAIRALQAIGLEVTAIRDVTPVPHNGCRPPKRRRV.

This sequence belongs to the universal ribosomal protein uS11 family. Part of the 30S ribosomal subunit. Interacts with proteins S7 and S18. Binds to IF-3.

In terms of biological role, located on the platform of the 30S subunit, it bridges several disparate RNA helices of the 16S rRNA. Forms part of the Shine-Dalgarno cleft in the 70S ribosome. The chain is Small ribosomal subunit protein uS11 from Exiguobacterium sibiricum (strain DSM 17290 / CCUG 55495 / CIP 109462 / JCM 13490 / 255-15).